Consider the following 1820-residue polypeptide: Afadin (1820 aa).

A Ras-associating 1 domain is found at 39-133; sequence FHGVMRFYFQ…GRFVLKNEND (95 aa). The tract at residues 129-196 is disordered; that stretch reads KNENDAIPAK…PSQGDDSENS (68 aa). A coiled-coil region spans residues 146–186; it reads EKQEKEGVIQNFKRTLSKKEKKEKKKKEKEALRQASDKEER. The span at 160 to 172 shows a compositional bias: basic residues; sequence TLSKKEKKEKKKK. The segment covering 173-189 has biased composition (basic and acidic residues); the sequence is EKEALRQASDKEERPSQ. 3 positions are modified to phosphoserine: Ser-216, Ser-246, and Ser-256. Residues 246–348 form the Ras-associating 2 domain; it reads SGGTLRIYAD…LVFQLKRRPP (103 aa). A compositionally biased stretch (basic and acidic residues) spans 356-371; that stretch reads KKHVEGKSLKGKDRAD. The tract at residues 356–377 is disordered; the sequence is KKHVEGKSLKGKDRADGSGYGS. Ser-391 and Ser-424 each carry phosphoserine. The 67-residue stretch at 426-492 folds into the FHA domain; that stretch reads TEVGTEKFDD…LQSGMRLQFG (67 aa). A phosphoserine mark is found at Ser-512, Ser-557, Ser-562, Ser-655, Ser-1083, Ser-1107, Ser-1126, Ser-1140, Ser-1143, Ser-1172, Ser-1173, Ser-1182, and Ser-1199. The tract at residues 538 to 569 is disordered; that stretch reads GDVHSGTALPASRSTTRLDSDRVSSASSTAER. The 256-residue stretch at 653–908 folds into the Dilute domain; sequence DISPTERTHK…IENVVAVAEN (256 aa). The 87-residue stretch at 1007–1093 folds into the PDZ domain; it reads IITVTLKKQN…VVTLEVAKQG (87 aa). Residues 1107–1194 are disordered; that stretch reads SPMMQRISDR…GKGPYTSGTA (88 aa). Residues 1113–1128 show a composition bias toward basic and acidic residues; it reads ISDRRGSGKPRPKSEG. Over residues 1132-1143 the composition is skewed to polar residues; that stretch reads YNNSAQNGSPES. Positions 1152–1172 are enriched in basic and acidic residues; sequence SEPKKLPGDDRLMKNRADHRS. A disordered region spans residues 1203–1222; that stretch reads GNLCTEEQSPPPRPEAYPIP. The residue at position 1232 (Thr-1232) is a Phosphothreonine. 3 disordered regions span residues 1235-1278, 1308-1527, and 1567-1716; these read ASKS…SQEE, QSSS…KQQQ, and RLQE…LKTQ. Ser-1238 carries the post-translational modification Phosphoserine. The segment covering 1252–1262 has biased composition (basic and acidic residues); the sequence is YEEKPHVHTES. Ser-1275 is subject to Phosphoserine. The span at 1309-1318 shows a compositional bias: low complexity; sequence SSSVESSTSS. Over residues 1325 to 1337 the composition is skewed to polar residues; the sequence is SSKSVTPASTLTK. Ser-1328 carries the phosphoserine modification. Residue Thr-1330 is modified to Phosphothreonine. Residues 1364-1373 show a composition bias toward pro residues; sequence LPPPPPPPPV. Residues 1407-1440 show a composition bias toward basic and acidic residues; that stretch reads EWKKREEHQRWYEKEKARLEEERERKRREQERKL. Residues 1410-1446 adopt a coiled-coil conformation; the sequence is KREEHQRWYEKEKARLEEERERKRREQERKLGQMRSQ. Polar residues predominate over residues 1443–1457; sequence MRSQTLNPASFSPLA. Over residues 1487–1503 the composition is skewed to basic and acidic residues; sequence TIERKDLQYITISKEEL. Phosphoserine is present on residues Ser-1499 and Ser-1510. The segment covering 1513-1526 has biased composition (basic and acidic residues); that stretch reads PWKRDAREKLEKQQ. The stretch at 1523 to 1561 forms a coiled coil; sequence EKQQQMHIVDMLSKEIHELQNKVDRTAEESDRLRKLMLE. Acidic residues predominate over residues 1576–1587; the sequence is EDDDEEEDDDVD. The stretch at 1593-1665 forms a coiled coil; sequence QRLEAERRAR…SRLEAERRRQ (73 aa). Over residues 1595–1675 the composition is skewed to basic and acidic residues; it reads LEAERRARMQ…HEEAARRLLE (81 aa). Phosphoserine is present on residues Ser-1694, Ser-1719, Ser-1770, and Ser-1795. The disordered stretch occupies residues 1734–1820; it reads EEEDYGPAGP…TELENELNTK (87 aa). Residues 1759–1772 are compositionally biased toward basic and acidic residues; sequence APREAREKLTRSQD. The segment covering 1800 to 1820 has biased composition (basic and acidic residues); it reads VSDKVKASRKLTELENELNTK. The residue at position 1803 (Lys-1803) is an N6-acetyllysine.

Homodimer. Interacts with F-actin, nectin and NECTIN3. Essential for the association of nectin and E-cadherin. Isoform 2/s-afadin does not interact with F-actin. Interacts with ZO-1 and occludin, but probably in an indirect manner. Interacts with RIT1, RIT2, NRXN1 and BCR. Interacts with ADAM10; the interaction locks ADAM10 at adherens junctions following ADAM10 recruitment to adherens junctions by TSPAN33. As to expression, isoform 1 is expressed only in a restricted set of epithelial structures during early embryogenesis.

It is found in the cell junction. The protein localises to the adherens junction. Belongs to an adhesion system, probably together with the E-cadherin-catenin system, which plays a role in the organization of homotypic, interneuronal and heterotypic cell-cell adherens junctions (AJs). Nectin- and actin-filament-binding protein that connects nectin to the actin cytoskeleton. May play a key role in the organization of epithelial structures of the embryonic ectoderm. Essential for the organization of adherens junctions. This is Afadin from Mus musculus (Mouse).